A 480-amino-acid polypeptide reads, in one-letter code: Aromatic-L-amino-acid decarboxylase (480 aa).

Lys-292 bears the N6-(pyridoxal phosphate)lysine mark.

The protein belongs to the group II decarboxylase family. The cofactor is pyridoxal 5'-phosphate.

The enzyme catalyses L-tryptophan + H(+) = tryptamine + CO2. It catalyses the reaction L-phenylalanine + H(+) = 2-phenylethylamine + CO2. It carries out the reaction 5-hydroxy-L-tryptophan + H(+) = serotonin + CO2. The catalysed reaction is L-dopa + H(+) = dopamine + CO2. In terms of biological role, involved in bacillamide C biosynthesis. Catalyzes the decarboxylation of L-tryptophan to tryptamine. The tryptamine obtained is then probably incorporated into the bacillamide C peptide, which is derived from the amino acids alanine, cysteine and tryptophan through nonribosomal peptide synthetase (NRPS) biosynthesis strategy. L-tryptophan is the best substrate, but the enzyme displays broad substrate specificity for various aromatic amino acids in vitro and it can also catalyze the decarboxylation of L-phenylalanine, 5-hydroxy-L-tryptophan (L-HTP) and L-DOPA, with lower efficiency. Exhibits weak activity with L-tyrosine. This is Aromatic-L-amino-acid decarboxylase from Bacillus atrophaeus.